Consider the following 461-residue polypeptide: Thyroid hormone receptor beta (461 aa).

The disordered stretch occupies residues 1 to 24 (MTPNSMTENGLPAWDKQKPRPDRG). The interval 1–106 (MTPNSMTENG…IPSYLDKDEL (106 aa)) is modulating. The segment covering 15–24 (DKQKPRPDRG) has biased composition (basic and acidic residues). Zn(2+)-binding residues include Cys107, Cys110, Cys124, Cys127, Cys145, Cys151, Cys161, and Cys164. NR C4-type zinc fingers lie at residues 107–127 (CVVC…CEGC) and 145–169 (CKYE…FKKC). A DNA-binding region (nuclear receptor) is located at residues 107–181 (CVVCGDKATG…VGMATDLVLD (75 aa)). Residues 217 to 461 (EEWELIKTVT…PPLFLEVFED (245 aa)) form the NR LBD domain. An interaction with NR2F6 region spans residues 244-461 (KFLPEDIGQA…PPLFLEVFED (218 aa)). 3,3',5-triiodo-L-thyronine is bound by residues Arg282, Asn331, and His435. L-thyroxine-binding residues include Arg282, Asn331, and His435.

The protein belongs to the nuclear hormone receptor family. NR1 subfamily. As to quaternary structure, binds DNA as a dimer; homodimer and heterodimer with RXRB. Interacts with the coactivators NCOA1/SRC1, NCOA2/GRIP1, NCOA7 and MED1/TRAP220 in a ligand-inducible manner. Interacts with the corepressor NCOR1 in absence of ligand. Interacts with C1D. Interacts with NR2F6; the interaction impairs the binding of the THRB homodimer and THRB:RXRB heterodimer to T3 response elements. Interacts with PRMT2 and THRSP. Interacts with TACC1; this interaction is decreased in the presence of thyroid hormone T3.

It is found in the nucleus. Nuclear hormone receptor that can act as a repressor or activator of transcription. High affinity receptor for thyroid hormones, including triiodothyronine and thyroxine. This chain is Thyroid hormone receptor beta (Thrb), found in Mus musculus (Mouse).